Reading from the N-terminus, the 215-residue chain is MEPAFHAALSRGLAALALPVAPEALPRLERFADRLLAWNRKVNLTTITDPAEVAEKHLVDSLLLLPLLDEVRTLLDLGSGAGLPGVPLACARPALEVTCCDSVAKKVAFVKAVAAELDLPVRAFAVRAEGDPEGEKLPRADAVVSRALSDPERWVPLGVRYLAPGGTLFAMLGREADEARLAAIGAASGLALVDVSRFELPLSRSARAIARWRAR.

S-adenosyl-L-methionine contacts are provided by residues G78, L83, 128–129, and R146; that span reads AE.

Belongs to the methyltransferase superfamily. RNA methyltransferase RsmG family.

The protein resides in the cytoplasm. It catalyses the reaction guanosine(527) in 16S rRNA + S-adenosyl-L-methionine = N(7)-methylguanosine(527) in 16S rRNA + S-adenosyl-L-homocysteine. Functionally, specifically methylates the N7 position of guanine in position 527 of 16S rRNA. This Anaeromyxobacter sp. (strain Fw109-5) protein is Ribosomal RNA small subunit methyltransferase G.